Here is a 1444-residue protein sequence, read N- to C-terminus: Rho GTPase-activating protein 31 (1444 aa).

Residues 21 to 216 (CDLTEYLESS…FILNHVDQIF (196 aa)) form the Rho-GAP domain. Position 272 is a phosphoserine (Ser-272). A Phosphothreonine modification is found at Thr-286. A phosphoserine mark is found at Ser-346, Ser-349, and Ser-387. The interval 398 to 427 (WGQEGMPPGAEGGFDVSSDRSHLQGAQARP) is disordered. A Phosphoserine modification is found at Ser-476. Positions 504-631 (TNSTPCRTPP…ESSTLQESPR (128 aa)) are disordered. The segment covering 515-534 (ELQSLSSLEEFSFHGSESGG) has biased composition (low complexity). Residues 600–619 (NELEKRPNPEKVVEEGREAG) show a composition bias toward basic and acidic residues. Thr-679 bears the Phosphothreonine mark. Disordered regions lie at residues 688–893 (SSLG…EDDT) and 906–1108 (EPWE…SSLN). Phosphoserine is present on residues Ser-701 and Ser-712. Polar residues predominate over residues 722–734 (PANQSTQGASTAA). The segment covering 735–745 (SREKPEPEQGL) has biased composition (basic and acidic residues). The segment covering 777-790 (LSPPLPPAPPPPTP) has biased composition (pro residues). Ser-778 is subject to Phosphoserine. A Phosphothreonine modification is found at Thr-789. A compositionally biased stretch (basic and acidic residues) spans 803–817 (GPEREDSSRKLRTDL). Positions 822–834 (LKSQDSPEISSLC) are enriched in polar residues. Residues 839–848 (ATPRHSDKQN) are compositionally biased toward basic and acidic residues. Residues 960 to 977 (TVKSQWTLEVPSSSSCAN) show a composition bias toward polar residues. Ser-974 is subject to Phosphoserine. A compositionally biased stretch (basic and acidic residues) spans 992 to 1008 (PRREITGWDEKALRSFR). Residues 1028–1038 (VQPNPAETSPI) show a composition bias toward polar residues. Over residues 1064 to 1075 (GPESSKESSPSV) the composition is skewed to low complexity. Residues Ser-1105, Ser-1106, and Ser-1178 each carry the phosphoserine modification. Composition is skewed to polar residues over residues 1211–1224 (QIPQ…SGEN) and 1234–1245 (EGPSSTSGTTQK). The disordered stretch occupies residues 1211–1346 (QIPQPLPSQS…HRSRPGRPQS (136 aa)). Residues 1246 to 1265 (PAKDDSPSSLESSKEEKPKQ) are compositionally biased toward basic and acidic residues. Polar residues-rich tracts occupy residues 1292–1303 (PGSSNLLSTQDA) and 1314–1323 (TEPSGDNLLS).

As to quaternary structure, interacts with ITSN1, which inhibits GAP activity. Interacts with PARVA. Interacts with GTP-loaded RHOU. In terms of processing, phosphorylation on Thr-789 reduces GAP activity.

It localises to the cell projection. It is found in the lamellipodium. Its subcellular location is the cell junction. The protein resides in the focal adhesion. Functionally, functions as a GTPase-activating protein (GAP) for RAC1 and CDC42. Required for cell spreading, polarized lamellipodia formation and cell migration. This Homo sapiens (Human) protein is Rho GTPase-activating protein 31 (ARHGAP31).